The sequence spans 469 residues: Signal recognition particle 54 kDa protein (469 aa).

Residues 104–111 (GLYGSGKT), 184–188 (DTAGR), and 242–245 (TKLD) contribute to the GTP site. Disordered regions lie at residues 388–410 (ELENPRVVGQSRTKRICRGSGKP) and 447–469 (QQGGGGGGGMGGMGGGGMGPFGD). A compositionally biased stretch (gly residues) spans 448–469 (QGGGGGGGMGGMGGGGMGPFGD).

Belongs to the GTP-binding SRP family. SRP54 subfamily. As to quaternary structure, part of the signal recognition particle protein translocation system, which is composed of SRP and FtsY. Archaeal SRP consists of a 7S RNA molecule of 300 nucleotides and two protein subunits: SRP54 and SRP19.

The protein resides in the cytoplasm. The catalysed reaction is GTP + H2O = GDP + phosphate + H(+). In terms of biological role, involved in targeting and insertion of nascent membrane proteins into the cytoplasmic membrane. Binds to the hydrophobic signal sequence of the ribosome-nascent chain (RNC) as it emerges from the ribosomes. The SRP-RNC complex is then targeted to the cytoplasmic membrane where it interacts with the SRP receptor FtsY. The protein is Signal recognition particle 54 kDa protein of Haloarcula marismortui (strain ATCC 43049 / DSM 3752 / JCM 8966 / VKM B-1809) (Halobacterium marismortui).